An 89-amino-acid chain; its full sequence is MSITAERKKELMGEFATAKGDTGSPEVQVAILSERIKNLTDHFKDHKKDNHSRRGLLALVSQRRSLLDYLKRKDDVRYQTLIEKLGLRR.

It belongs to the universal ribosomal protein uS15 family. Part of the 30S ribosomal subunit. Forms a bridge to the 50S subunit in the 70S ribosome, contacting the 23S rRNA.

Its function is as follows. One of the primary rRNA binding proteins, it binds directly to 16S rRNA where it helps nucleate assembly of the platform of the 30S subunit by binding and bridging several RNA helices of the 16S rRNA. Forms an intersubunit bridge (bridge B4) with the 23S rRNA of the 50S subunit in the ribosome. The protein is Small ribosomal subunit protein uS15 of Mesorhizobium japonicum (strain LMG 29417 / CECT 9101 / MAFF 303099) (Mesorhizobium loti (strain MAFF 303099)).